We begin with the raw amino-acid sequence, 481 residues long: Cysteine--tRNA ligase (481 aa).

Cysteine 27 provides a ligand contact to Zn(2+). The 'HIGH' region motif lies at 29-39; it reads PTVYNYAHIGN. Zn(2+) is bound by residues cysteine 222, histidine 247, and glutamate 251. Positions 279–283 match the 'KMSKS' region motif; that stretch reads KMSKS. Lysine 282 provides a ligand contact to ATP.

This sequence belongs to the class-I aminoacyl-tRNA synthetase family. In terms of assembly, monomer. It depends on Zn(2+) as a cofactor.

Its subcellular location is the cytoplasm. It carries out the reaction tRNA(Cys) + L-cysteine + ATP = L-cysteinyl-tRNA(Cys) + AMP + diphosphate. The chain is Cysteine--tRNA ligase from Borrelia hermsii (strain HS1 / DAH).